We begin with the raw amino-acid sequence, 332 residues long: Cell growth regulator with RING finger domain protein 1 (332 aa).

An RING-type zinc finger spans residues Cys274–Arg309.

Ubiquitously expressed with high expression in testis and the cerebellum.

The protein resides in the nucleus. The protein localises to the endoplasmic reticulum. Functionally, able to inhibit growth in several cell lines. This Homo sapiens (Human) protein is Cell growth regulator with RING finger domain protein 1 (CGRRF1).